A 133-amino-acid polypeptide reads, in one-letter code: MPKRTRFRKQHRGRMKGISYRGNHICFGRYALQALEPAWITSRQIEAGRRAMTRYARRGGKIWVRIFPDKPVTVRPTETRMGSGKGSPEYWVSVVKPGRILYEMGGVSETVARAAIKIAACKMPIRTQFIISG.

It belongs to the universal ribosomal protein uL16 family. In terms of assembly, part of the 50S ribosomal subunit.

Its subcellular location is the plastid. It localises to the chloroplast. This is Large ribosomal subunit protein uL16c from Liriodendron tulipifera (Tuliptree).